A 530-amino-acid polypeptide reads, in one-letter code: uncharacterized protein (530 aa).

Positions 485–529 (SKEENREIKLSIRENKEKQRKKSVEKSVSKLQNQLNRLLNKNTIE) form a coiled coil.

This is an uncharacterized protein from Acanthamoeba polyphaga (Amoeba).